We begin with the raw amino-acid sequence, 531 residues long: 4-hydroxyphenylacetaldehyde oxime monooxygenase (531 aa).

A helical membrane pass occupies residues 18–38 (WQTCLLVLLPVLLVSYYLLTS). Heme b contacts are provided by Arg122, Arg151, Arg466, and Cys468.

This sequence belongs to the cytochrome P450 family. It depends on heme b as a cofactor.

It is found in the endoplasmic reticulum membrane. It carries out the reaction (E)-4-hydroxyphenylacetaldehyde oxime + reduced [NADPH--hemoprotein reductase] + O2 = (S)-4-hydroxymandelonitrile + oxidized [NADPH--hemoprotein reductase] + 2 H2O + H(+). It catalyses the reaction (E)-4-hydroxyphenylacetaldehyde oxime = (Z)-(4-hydroxyphenyl)acetaldehyde oxime. The enzyme catalyses (Z)-(4-hydroxyphenyl)acetaldehyde oxime = 4-hydroxyphenylacetonitrile + H2O. The catalysed reaction is 4-hydroxyphenylacetonitrile + reduced [NADPH--hemoprotein reductase] + O2 = (S)-4-hydroxymandelonitrile + oxidized [NADPH--hemoprotein reductase] + H2O + H(+). It functions in the pathway secondary metabolite biosynthesis; dhurrin biosynthesis; dhurrin from L-tyrosine: step 2/3. Functionally, cytochrome P450 involved in the biosynthesis of the cyanogenic glucoside dhurrin. Catalyzes the conversion of p-hydroxyphenylacetaldoxime to p-hydroxymandelonitrile via three different and successive activities: isomerization of the (E) isomer to the (Z) isomer of p-hydroxyphenylacetaldoxime, followed by dehydration of the oxime to the corresponding nitrile, and C-hydroxylation of the nitrile to produce p-hydroxymandelonitrile. The chain is 4-hydroxyphenylacetaldehyde oxime monooxygenase from Sorghum bicolor (Sorghum).